Here is a 374-residue protein sequence, read N- to C-terminus: Carboxypeptidase O (374 aa).

A signal peptide spans 1-20; that stretch reads MKPLLETLYLLGMLVPGGLG. Residues 49–344 form the Peptidase M14 domain; sequence IYHPMGEIYE…EAVLSVLDDV (296 aa). Positions 108 and 111 each coordinate Zn(2+). N-linked (GlcNAc...) asparagine glycosylation is found at N132, N174, and N187. Zn(2+) is bound at residue H236. N-linked (GlcNAc...) asparagine glycosylation occurs at N251. Catalysis depends on E310, which acts as the Proton donor/acceptor. D352 carries GPI-anchor amidated aspartate lipidation. Positions 353-374 are cleaved as a propeptide — removed in mature form; the sequence is SAGRVTSATMLLGLLVSCMSLL.

Belongs to the peptidase M14 family. Requires Zn(2+) as cofactor. Post-translationally, N-glycosylated. As to expression, detected in enterocytes of the ileum.

The protein localises to the apical cell membrane. With respect to regulation, strongly inhibited by potato carboxypeptidase inhibitor, and the chelating agents EDTA and 1,10-phenanthroline. Also inhibited by compounds with multiple carboxylic acid groups such as citrate and succinate, and to a lesser exent the amino acids aspartate and glutamate. Not significantly inhibited by benzylsuccinic acid. In terms of biological role, carboxypeptidase which preferentially cleaves C-terminal acidic residues from peptides and proteins. Can also cleave C-terminal hydrophobic amino acids, with a preference for small residues over large residues. This Homo sapiens (Human) protein is Carboxypeptidase O.